The primary structure comprises 335 residues: Phosphoserine phosphatase RsbU (335 aa).

In terms of domain architecture, PPM-type phosphatase spans 123 to 333 (DIGAISVPAK…DDFTLIVLRR (211 aa)).

The catalysed reaction is O-phospho-L-serine + H2O = L-serine + phosphate. It catalyses the reaction O-phospho-D-serine + H2O = D-serine + phosphate. With respect to regulation, stimulated by a long-lived interaction with RsbT. Its function is as follows. Positive regulator of sigma-B activity. Dephosphorylates RsbV in response to environmental stress conveyed from the RsbXST module. The sequence is that of Phosphoserine phosphatase RsbU (rsbU) from Bacillus subtilis (strain 168).